A 406-amino-acid chain; its full sequence is Cytochrome bc1 complex Rieske iron-sulfur subunit (406 aa).

A run of 3 helical transmembrane segments spans residues 56-76 (VGIW…VYLF), 98-118 (LLGL…IFYI), and 166-186 (MLGI…GGMV). The region spanning 291–388 (HGPRNAVMLI…ITVDEEGYLV (98 aa)) is the Rieske domain. [2Fe-2S] cluster contacts are provided by C331, H333, C350, and H353. C336 and C352 are joined by a disulfide.

The protein belongs to the Rieske iron-sulfur protein family. The cytochrome bc1 complex is composed of a cytochrome b (QcrB), the Rieske iron-sulfur protein (QcrA) and a diheme cytochrome c (QcrC) subunit. The bc1 complex forms a supercomplex with cytochrome c oxidase (cytochrome aa3). Requires [2Fe-2S] cluster as cofactor.

Its subcellular location is the cell membrane. In terms of biological role, iron-sulfur subunit of the cytochrome bc1 complex, an essential component of the respiratory electron transport chain required for ATP synthesis. The bc1 complex catalyzes the oxidation of menaquinol and the reduction of cytochrome c in the respiratory chain. The bc1 complex operates through a Q-cycle mechanism that couples electron transfer to generation of the proton gradient that drives ATP synthesis. This is Cytochrome bc1 complex Rieske iron-sulfur subunit (qcrA) from Corynebacterium diphtheriae (strain ATCC 700971 / NCTC 13129 / Biotype gravis).